The sequence spans 499 residues: Cytosol aminopeptidase (499 aa).

Mn(2+) contacts are provided by Lys267 and Asp272. Residue Lys279 is part of the active site. Mn(2+) is bound by residues Asp290, Asp349, and Glu351. Arg353 is a catalytic residue.

The protein belongs to the peptidase M17 family. Mn(2+) serves as cofactor.

The protein resides in the cytoplasm. The enzyme catalyses Release of an N-terminal amino acid, Xaa-|-Yaa-, in which Xaa is preferably Leu, but may be other amino acids including Pro although not Arg or Lys, and Yaa may be Pro. Amino acid amides and methyl esters are also readily hydrolyzed, but rates on arylamides are exceedingly low.. The catalysed reaction is Release of an N-terminal amino acid, preferentially leucine, but not glutamic or aspartic acids.. In terms of biological role, presumably involved in the processing and regular turnover of intracellular proteins. Catalyzes the removal of unsubstituted N-terminal amino acids from various peptides. The polypeptide is Cytosol aminopeptidase (pepA) (Buchnera aphidicola subsp. Acyrthosiphon pisum (strain APS) (Acyrthosiphon pisum symbiotic bacterium)).